The following is a 381-amino-acid chain: NF-kappa-B inhibitor-like protein 1 (381 aa).

Positions Met1 to Glu34 are disordered. 2 ANK repeats span residues Gly64–His93 and His97–Lys133. Disordered regions lie at residues Lys131–Gln167, Gly186–Glu242, and Glu256–Leu294. At Ser150 the chain carries Phosphoserine. A compositionally biased stretch (acidic residues) spans Ser150 to Ala159. Positions Glu256–Arg287 are enriched in basic and acidic residues.

Interacts with CACTIN (via N-terminal domain); the interaction occurs in a pro-inflammatory-independent manner.

It localises to the nucleus. Functionally, involved in the regulation of innate immune response. Acts as negative regulator of Toll-like receptor and interferon-regulatory factor (IRF) signaling pathways. Contributes to the negative regulation of transcriptional activation of NF-kappa-B target genes in response to endogenous pro-inflammatory stimuli. The protein is NF-kappa-B inhibitor-like protein 1 (NFKBIL1) of Macaca mulatta (Rhesus macaque).